We begin with the raw amino-acid sequence, 271 residues long: MASENMTPQDYIGHHLNNLQLDLRTFSLVDPHNHTATFWTLNIDSMFFSVVLGLLFLAMFRSVAKKATSGVPGKFQTFIEMIIGFVHGSVKDMYHGKSKVIAPLALTVFVWVFLMNLMDLLPIDLLPYIGEHIFGLPALRVVPSADVNITLSMALGVFILIIFYSIKMKGVGGFVKELTMQPFNHWAFIPVNLILEGVSLLSKPVSLGLRLFGNMYAGELIFILIAGLLPWWSQWVLNVPWAIFHILIITLQAFIFMVLTIVYLSMASEEH.

5 helical membrane passes run 38–58 (FWTLNIDSMFFSVVLGLLFLA), 100–120 (VIAPLALTVFVWVFLMNLMDL), 146–166 (DVNITLSMALGVFILIIFYSI), 211–231 (LFGNMYAGELIFILIAGLLPW), and 242–262 (AIFHILIITLQAFIFMVLTIV).

Belongs to the ATPase A chain family. As to quaternary structure, F-type ATPases have 2 components, CF(1) - the catalytic core - and CF(0) - the membrane proton channel. CF(1) has five subunits: alpha(3), beta(3), gamma(1), delta(1), epsilon(1). CF(0) has three main subunits: a(1), b(2) and c(9-12). The alpha and beta chains form an alternating ring which encloses part of the gamma chain. CF(1) is attached to CF(0) by a central stalk formed by the gamma and epsilon chains, while a peripheral stalk is formed by the delta and b chains.

The protein resides in the cell inner membrane. In terms of biological role, key component of the proton channel; it plays a direct role in the translocation of protons across the membrane. In Klebsiella pneumoniae (strain 342), this protein is ATP synthase subunit a.